We begin with the raw amino-acid sequence, 566 residues long: MSLTYKPKMQHEDMQDLSSQIRFVAAEGKIWLGEQRMLVMQLSTLASFRREIISLIGVERAKGFFLRLGYQSGLMDAELARKLRPAMREEEVFLAGPQLYALKGMVKVRLLTMDIAIRDGRFNVEAEWIDSFEVDICRTELGLMNEPVCWTVLGYASGYGSAFMGRRIIFQETSCRGCGDDKCLIVGKTAEEWGDVSSFEAYFKSDPIVDERYELQTQVANLRNRLKQYDGQYYGIGHSPAYKRICETIDKAARGRVSVLLLGETGVGKEVIARSVHLRSERAEQPFVAVNCAAIPPDLIESELFGVDKGAYTGAVNARAGRFERANGGTIFLDEVIELTPRAQATLLRVLQEGELERVGGDRTRKVDVRLITATNENLEEAVKMGRFRADLFFRLNVFPVHIPPLRERVEDIPLLVEHFLRRHHKEYGKKTLGLSDRAMEACLHYQWPGNIRELENALERGVILTESNESINVESLFPGLATATEGDRLSSEGRLEEESGDSWFRQIIDQGVSLEDLEAGLMRTAMDRCGQNISQAARLLGLTRPAMAYRLKKLDPSLSVKAMGR.

In terms of domain architecture, Sigma-54 factor interaction spans 235–464; it reads GIGHSPAYKR…LENALERGVI (230 aa). ATP is bound by residues 263-270 and 326-335; these read GETGVGKE and ANGGTIFLDE. Residues 534-553 constitute a DNA-binding region (H-T-H motif); sequence ISQAARLLGLTRPAMAYRLK.

Its function is as follows. Regulatory protein of the TOL plasmid xyl operons. In the presence of m-xylene or m-methylbenzyl alcohol XylR activates both the xylCMABN operon and the regulatory gene xylS; xylS itself activates the xylXYZLTEGFJQKIH operon. XylR interacts with sigma-54. The chain is Transcriptional regulatory protein XylR (xylR) from Pseudomonas putida (Arthrobacter siderocapsulatus).